Consider the following 440-residue polypeptide: Xylose isomerase (440 aa).

Mg(2+)-binding residues include aspartate 307 and aspartate 309.

It belongs to the xylose isomerase family. Homotetramer. It depends on Mg(2+) as a cofactor.

Its subcellular location is the cytoplasm. The catalysed reaction is alpha-D-xylose = alpha-D-xylulofuranose. In Pectobacterium carotovorum subsp. carotovorum (strain PC1), this protein is Xylose isomerase.